A 238-amino-acid chain; its full sequence is 2-C-methyl-D-erythritol 4-phosphate cytidylyltransferase (238 aa).

This sequence belongs to the IspD/TarI cytidylyltransferase family. IspD subfamily.

It carries out the reaction 2-C-methyl-D-erythritol 4-phosphate + CTP + H(+) = 4-CDP-2-C-methyl-D-erythritol + diphosphate. It participates in isoprenoid biosynthesis; isopentenyl diphosphate biosynthesis via DXP pathway; isopentenyl diphosphate from 1-deoxy-D-xylulose 5-phosphate: step 2/6. Catalyzes the formation of 4-diphosphocytidyl-2-C-methyl-D-erythritol from CTP and 2-C-methyl-D-erythritol 4-phosphate (MEP). The chain is 2-C-methyl-D-erythritol 4-phosphate cytidylyltransferase from Acinetobacter baumannii (strain ACICU).